A 152-amino-acid chain; its full sequence is UPF0179 protein HQ_3004A (152 aa).

It belongs to the UPF0179 family.

This Haloquadratum walsbyi (strain DSM 16790 / HBSQ001) protein is UPF0179 protein HQ_3004A.